Here is a 1466-residue protein sequence, read N- to C-terminus: DNA-directed RNA polymerase subunit beta'' (1466 aa).

Zn(2+)-binding residues include Cys-220, Cys-296, Cys-303, and Cys-306. The interval 618–725 is disordered; that stretch reads TREEDLEDEY…EDEYDSSEED (108 aa). 3 stretches are compositionally biased toward acidic residues: residues 621–631, 639–651, and 707–725; these read EDLEDEYETLE, DEYE…DEYG, and LEED…SEED.

It belongs to the RNA polymerase beta' chain family. RpoC2 subfamily. As to quaternary structure, in plastids the minimal PEP RNA polymerase catalytic core is composed of four subunits: alpha, beta, beta', and beta''. When a (nuclear-encoded) sigma factor is associated with the core the holoenzyme is formed, which can initiate transcription. Zn(2+) is required as a cofactor.

The protein localises to the plastid. It is found in the chloroplast. The catalysed reaction is RNA(n) + a ribonucleoside 5'-triphosphate = RNA(n+1) + diphosphate. Its function is as follows. DNA-dependent RNA polymerase catalyzes the transcription of DNA into RNA using the four ribonucleoside triphosphates as substrates. The sequence is that of DNA-directed RNA polymerase subunit beta'' from Agrostis stolonifera (Creeping bentgrass).